Reading from the N-terminus, the 239-residue chain is tRNA (guanine-N(7)-)-methyltransferase (239 aa).

Positions 69, 94, 121, and 144 each coordinate S-adenosyl-L-methionine. D144 is a catalytic residue. K148 contributes to the substrate binding site. An interaction with RNA region spans residues 150 to 155 (RHNKRR). Substrate contacts are provided by residues D180 and 217-220 (TKFE).

This sequence belongs to the class I-like SAM-binding methyltransferase superfamily. TrmB family. In terms of assembly, monomer.

The catalysed reaction is guanosine(46) in tRNA + S-adenosyl-L-methionine = N(7)-methylguanosine(46) in tRNA + S-adenosyl-L-homocysteine. Its pathway is tRNA modification; N(7)-methylguanine-tRNA biosynthesis. Catalyzes the formation of N(7)-methylguanine at position 46 (m7G46) in tRNA. The chain is tRNA (guanine-N(7)-)-methyltransferase from Shigella boydii serotype 4 (strain Sb227).